A 127-amino-acid polypeptide reads, in one-letter code: Large ribosomal subunit protein bL21 (127 aa).

It belongs to the bacterial ribosomal protein bL21 family. As to quaternary structure, part of the 50S ribosomal subunit. Contacts protein L20.

This protein binds to 23S rRNA in the presence of protein L20. This is Large ribosomal subunit protein bL21 from Synechococcus elongatus (strain ATCC 33912 / PCC 7942 / FACHB-805) (Anacystis nidulans R2).